We begin with the raw amino-acid sequence, 271 residues long: Tryptophan synthase alpha chain (271 aa).

Catalysis depends on proton acceptor residues Glu49 and Asp60.

This sequence belongs to the TrpA family. As to quaternary structure, tetramer of two alpha and two beta chains.

The catalysed reaction is (1S,2R)-1-C-(indol-3-yl)glycerol 3-phosphate + L-serine = D-glyceraldehyde 3-phosphate + L-tryptophan + H2O. Its pathway is amino-acid biosynthesis; L-tryptophan biosynthesis; L-tryptophan from chorismate: step 5/5. In terms of biological role, the alpha subunit is responsible for the aldol cleavage of indoleglycerol phosphate to indole and glyceraldehyde 3-phosphate. The polypeptide is Tryptophan synthase alpha chain (Rhizorhabdus wittichii (strain DSM 6014 / CCUG 31198 / JCM 15750 / NBRC 105917 / EY 4224 / RW1) (Sphingomonas wittichii)).